The chain runs to 237 residues: 7-cyano-7-deazaguanine synthase (237 aa).

ATP is bound at residue 9–19 (YSGGLDSTTCL). 4 residues coordinate Zn(2+): Cys189, Cys199, Cys202, and Cys205.

The protein belongs to the QueC family. Zn(2+) serves as cofactor.

The enzyme catalyses 7-carboxy-7-deazaguanine + NH4(+) + ATP = 7-cyano-7-deazaguanine + ADP + phosphate + H2O + H(+). Its pathway is purine metabolism; 7-cyano-7-deazaguanine biosynthesis. Its function is as follows. Catalyzes the ATP-dependent conversion of 7-carboxy-7-deazaguanine (CDG) to 7-cyano-7-deazaguanine (preQ(0)). This chain is 7-cyano-7-deazaguanine synthase, found in Geobacter metallireducens (strain ATCC 53774 / DSM 7210 / GS-15).